We begin with the raw amino-acid sequence, 199 residues long: Pyridoxal 5'-phosphate synthase subunit PdxT (199 aa).

Residue 52–54 coordinates L-glutamine; the sequence is GES. Residue C84 is the Nucleophile of the active site. Residues R115 and 143–144 each bind L-glutamine; that span reads IR. Active-site charge relay system residues include H179 and E181.

It belongs to the glutaminase PdxT/SNO family. In the presence of PdxS, forms a dodecamer of heterodimers. Only shows activity in the heterodimer.

It catalyses the reaction aldehydo-D-ribose 5-phosphate + D-glyceraldehyde 3-phosphate + L-glutamine = pyridoxal 5'-phosphate + L-glutamate + phosphate + 3 H2O + H(+). The enzyme catalyses L-glutamine + H2O = L-glutamate + NH4(+). It participates in cofactor biosynthesis; pyridoxal 5'-phosphate biosynthesis. Functionally, catalyzes the hydrolysis of glutamine to glutamate and ammonia as part of the biosynthesis of pyridoxal 5'-phosphate. The resulting ammonia molecule is channeled to the active site of PdxS. In Methanosarcina mazei (strain ATCC BAA-159 / DSM 3647 / Goe1 / Go1 / JCM 11833 / OCM 88) (Methanosarcina frisia), this protein is Pyridoxal 5'-phosphate synthase subunit PdxT.